A 238-amino-acid polypeptide reads, in one-letter code: Transcriptional activator protein AnoR (238 aa).

The HTH luxR-type domain maps to 170 to 236; sequence EFSQFNLYLT…SAAIRAVMLG (67 aa). The segment at residues 195-214 is a DNA-binding region (H-T-H motif); the sequence is SAEIAQIIGVTERTVNFHLC.

This sequence belongs to the autoinducer-regulated transcriptional regulatory protein family.

Functionally, positively regulates the expression of anoI. Required for biofilm formation and motility. Probably part of a quorum-sensing system with AnoI. The sequence is that of Transcriptional activator protein AnoR from Acinetobacter nosocomialis.